The following is a 243-amino-acid chain: Voltage-gated monoatomic cation channel TMEM109 (243 aa).

The signal sequence occupies residues 1 to 33 (MAGAHSTPLWSRHLLKAVLMVLVALFLVHSASA). The Lumenal segment spans residues 34–83 (QSHREFASPGQQKKETSADILTQIGRSLKEMLDTWLGPETMHVISETLLQ). Residues 84 to 104 (VMWAISSAISVACFALSGIAA) traverse the membrane as a helical segment. Topologically, residues 105-135 (QLLSALGLDGEQLTQGLKLSPSQVQTLLLWG) are cytoplasmic. Residues 136–156 (AAALVIYWLLSLLLGLVLALL) traverse the membrane as a helical segment. The Lumenal segment spans residues 157-185 (GRILGGLKLVLFVAGFVALVRSVPDPSTR). A helical transmembrane segment spans residues 186 to 205 (ALMLLALLTLFALLSRLTGS). At 206-243 (RSSGSHLEAKVRGLERQIEELRGRQRRAAKMPRSMEEE) the chain is on the cytoplasmic side.

As to quaternary structure, homooligomer. Interacts with CRYAB; in the cellular response to DNA damage.

The protein resides in the nucleus outer membrane. The protein localises to the endoplasmic reticulum membrane. It localises to the sarcoplasmic reticulum membrane. The catalysed reaction is K(+)(in) = K(+)(out). The enzyme catalyses Ca(2+)(in) = Ca(2+)(out). In terms of biological role, functions as a voltage-gated monoatomic cation channel permeable to both potassium and calcium. Plays a role in the cellular response to DNA damage. This chain is Voltage-gated monoatomic cation channel TMEM109, found in Mus musculus (Mouse).